Reading from the N-terminus, the 315-residue chain is Methionyl-tRNA formyltransferase (315 aa).

117 to 120 (SLLP) contacts (6S)-5,6,7,8-tetrahydrofolate.

It belongs to the Fmt family.

The catalysed reaction is L-methionyl-tRNA(fMet) + (6R)-10-formyltetrahydrofolate = N-formyl-L-methionyl-tRNA(fMet) + (6S)-5,6,7,8-tetrahydrofolate + H(+). Attaches a formyl group to the free amino group of methionyl-tRNA(fMet). The formyl group appears to play a dual role in the initiator identity of N-formylmethionyl-tRNA by promoting its recognition by IF2 and preventing the misappropriation of this tRNA by the elongation apparatus. This is Methionyl-tRNA formyltransferase from Methylibium petroleiphilum (strain ATCC BAA-1232 / LMG 22953 / PM1).